The chain runs to 151 residues: MRSYDFSPLWRSTIGFDRLFDLAESAQRATEDNYPPYNIERLGDDRYQISLAVAGFSPDEISVTAEQNVVTIEGNKTDKTEREFMYRGISTRAFKRQFNLADYVQVKNASFDNGLLKIELVREIPEAMKPRRIAINGATSDNLHKLESRAA.

A sHSP domain is found at 28–138 (RATEDNYPPY…KPRRIAINGA (111 aa)).

This sequence belongs to the small heat shock protein (HSP20) family.

The protein is Small heat shock protein HspD (hspD) of Bradyrhizobium diazoefficiens (strain JCM 10833 / BCRC 13528 / IAM 13628 / NBRC 14792 / USDA 110).